We begin with the raw amino-acid sequence, 512 residues long: Probable metalloreductase AIM14 (512 aa).

The next 7 membrane-spanning stretches (helical) occupy residues 20-40 (IKYG…ILIC), 61-81 (PLFI…VFHV), 97-117 (MSYA…SIGL), 132-152 (VIIA…ILEG), 161-181 (LWNF…IISL), 191-211 (YFYV…CLHA), and 218-235 (YAIA…ERYA). The Ferric oxidoreductase domain maps to 94-206 (FGRMSYALLP…NITVWLFVGL (113 aa)). Residues 230 to 355 (IFERYAKSHS…GGSGISFALP (126 aa)) form the FAD-binding FR-type domain. Over residues 427–436 (ESLPSSETPS) the composition is skewed to low complexity. The segment at 427 to 451 (ESLPSSETPSRTVNDDSLSQDTRPK) is disordered. A compositionally biased stretch (polar residues) spans 437 to 447 (RTVNDDSLSQD).

Belongs to the ferric reductase (FRE) family. AIM14 subfamily.

It is found in the membrane. Probable cell surface metalloreductase. May be involved in iron or copper homeostasis. The protein is Probable metalloreductase AIM14 (AIM14) of Debaryomyces hansenii (strain ATCC 36239 / CBS 767 / BCRC 21394 / JCM 1990 / NBRC 0083 / IGC 2968) (Yeast).